A 374-amino-acid chain; its full sequence is uncharacterized protein (374 aa).

Residues 1–13 (METKYHEYDDVQT) are compositionally biased toward basic and acidic residues. 3 disordered regions span residues 1–20 (METKYHEYDDVQTKDTPSNK), 91–193 (SPMT…PLNQ), and 236–374 (KINN…SDFE). Over residues 95–155 (NNNNNNNNNN…NNSSNNNNNN (61 aa)) the composition is skewed to low complexity. Over residues 166 to 193 (ISSNQSSPLSIYSTPPNPSSYVSSPLNQ) the composition is skewed to polar residues. Residues 242 to 262 (APPPPPKACAPPPPPPPPPPI) show a composition bias toward pro residues. Over residues 277 to 300 (NNNNNNNNNNNSSNTNDSNNTNNT) the composition is skewed to low complexity.

This is an uncharacterized protein from Dictyostelium discoideum (Social amoeba).